The primary structure comprises 363 residues: Chorismate synthase (363 aa).

Positions 36–58 are disordered; sequence SESDIQGDLDRRRPGQSKITTPR. An NADP(+)-binding site is contributed by Arg-47. FMN is bound by residues 124–126, Gly-286, 301–305, and Arg-327; these read RSS and KPTAT.

Belongs to the chorismate synthase family. Homotetramer. Requires FMNH2 as cofactor.

The catalysed reaction is 5-O-(1-carboxyvinyl)-3-phosphoshikimate = chorismate + phosphate. It participates in metabolic intermediate biosynthesis; chorismate biosynthesis; chorismate from D-erythrose 4-phosphate and phosphoenolpyruvate: step 7/7. Functionally, catalyzes the anti-1,4-elimination of the C-3 phosphate and the C-6 proR hydrogen from 5-enolpyruvylshikimate-3-phosphate (EPSP) to yield chorismate, which is the branch point compound that serves as the starting substrate for the three terminal pathways of aromatic amino acid biosynthesis. This reaction introduces a second double bond into the aromatic ring system. This Crocosphaera subtropica (strain ATCC 51142 / BH68) (Cyanothece sp. (strain ATCC 51142)) protein is Chorismate synthase.